The primary structure comprises 102 residues: Protein translation factor SUI1 homolog (102 aa).

It belongs to the SUI1 family.

The polypeptide is Protein translation factor SUI1 homolog (Methanococcus maripaludis (strain C5 / ATCC BAA-1333)).